Reading from the N-terminus, the 170-residue chain is Small ribosomal subunit protein mS41 (170 aa).

Residues 1-20 (MFRTLLSSTVRSIQLKPVTS) constitute a mitochondrion transit peptide.

The protein belongs to the mitochondrion-specific ribosomal protein mS41 family. In terms of assembly, component of the mitochondrial small ribosomal subunit (mt-SSU).

It is found in the mitochondrion. Functionally, component of the mitochondrial ribosome (mitoribosome), a dedicated translation machinery responsible for the synthesis of mitochondrial genome-encoded proteins, including at least some of the essential transmembrane subunits of the mitochondrial respiratory chain. The mitoribosomes are attached to the mitochondrial inner membrane and translation products are cotranslationally integrated into the membrane. mS41 is involved in telomere length regulation. This is Small ribosomal subunit protein mS41 (FYV4) from Candida albicans (strain SC5314 / ATCC MYA-2876) (Yeast).